The following is a 103-amino-acid chain: Large ribosomal subunit protein mL63 (103 aa).

The protein belongs to the mitochondrion-specific ribosomal protein mL63 family.

Its subcellular location is the mitochondrion. The sequence is that of Large ribosomal subunit protein mL63 (mrpl57) from Danio rerio (Zebrafish).